The primary structure comprises 552 residues: Mothers against decapentaplegic homolog 4 (552 aa).

The interval 1 to 322 (MDNMSITNTP…PISNHPAPEY (322 aa)) is mediates interaction with ZBTB7A. The MH1 domain maps to 18 to 142 (SIVHSLMCHR…YERVVSPGID (125 aa)). Residue Lys-37 is modified to N6-acetyllysine. Positions 44 to 69 (VKKLKEKKDELDSLITAITTNGAHPS) are required for interaction with TSC22D1. Cys-71 lines the Zn(2+) pocket. Lys-113 participates in a covalent cross-link: Glycyl lysine isopeptide (Lys-Gly) (interchain with G-Cter in SUMO2). The Zn(2+) site is built by Cys-115, Cys-127, and His-132. The tract at residues 264–297 (STTTWTGSRTAPYPPNLPHHQNGHLQHHPPMPPH) is disordered. The tract at residues 275–320 (PYPPNLPHHQNGHLQHHPPMPPHPGHYWPVHNELAFQPPISNHPAP) is SAD. The region spanning 323-552 (WCSIAYFEMD…MPIADPQPLD (230 aa)) is the MH2 domain. 2 positions are modified to N6-acetyllysine: Lys-428 and Lys-507. Lys-519 participates in a covalent cross-link: Glycyl lysine isopeptide (Lys-Gly) (interchain with G-Cter in ubiquitin).

This sequence belongs to the dwarfin/SMAD family. Monomer; in the absence of TGF-beta activation. Heterotrimer; on TGF-beta activation. Heterotrimer composed of two molecules of a C-terminally phosphorylated R-SMAD molecule, SMAD2 or SMAD3, and one molecule of SMAD4 to form the transcriptional active SMAD2/SMAD3-SMAD4 complex. Found in a ternary complex composed of SMAD4, STK11/LKB1 and STK11IP. Found in a complex with SMAD1 and YY1. Identified in a complex that contains at least ZNF451, SMAD2, SMAD3 and SMAD4. Interacts with ATF2, COPS5, DACH1, MSG1, SKI, STK11/LKB1, STK11IP and TRIM33. Associates with ZNF423 or ZNF521 in response to BMP2 leading to activate transcription of BMP target genes. Interacts with USP9X. Interacts with RBPMS. Interacts with WWTR1 (via coiled-coil domain). Interacts with CITED1 and CITED2. Interacts with PDPK1 (via PH domain). Interacts with VPS39; this interaction affects heterodimer formation with SMAD3, but not with SMAD2, and leads to inhibition of SMAD3-dependent transcription activation. Interactions with VPS39 and SMAD2 may be mutually exclusive. Interacts (via MH2 domain) with ZNF451 (via N-terminal zinc-finger domains). Interacts with ZC3H3. Interacts weakly with ZNF8. Interacts with NUP93 and IPO7; translocates SMAD4 to the nucleus through the NPC upon BMP7 stimulation resulting in activation of SMAD4 signaling. Interacts with CREB3L1, the interaction takes place upon TGFB1 induction and SMAD4 acts as a CREB3L1 coactivator to induce the expression of genes involved in the assembly of collagen extracellular matrix. Interacts with DLX1. Interacts with ZBTB7A; the interaction is direct and stimulated by TGFB1. Interacts with CREBBP; the recruitment of this transcriptional coactivator is negatively regulated by ZBTB7A. Interacts with EP300; the interaction with this transcriptional coactivator is negatively regulated by ZBTB7A. Interacts with HDAC1. Interacts (via MH2 domain) with ZMIZ1 (via SP-RING-type domain); in the TGF-beta signaling pathway increases the activity of the SMAD3/SMAD4 transcriptional complex. Interacts (via N-terminus) with TSC22D1. Phosphorylated by PDPK1. Post-translationally, monoubiquitinated on Lys-519 by E3 ubiquitin-protein ligase TRIM33. Monoubiquitination hampers its ability to form a stable complex with activated SMAD2/3 resulting in inhibition of TGF-beta/BMP signaling cascade. Deubiquitination by USP9X restores its competence to mediate TGF-beta signaling.

The protein resides in the cytoplasm. It localises to the nucleus. In terms of biological role, common SMAD (co-SMAD) is the coactivator and mediator of signal transduction by TGF-beta (transforming growth factor). Component of the heterotrimeric SMAD2/SMAD3-SMAD4 complex that forms in the nucleus and is required for the TGF-mediated signaling. Promotes binding of the SMAD2/SMAD4/FAST-1 complex to DNA and provides an activation function required for SMAD1 or SMAD2 to stimulate transcription. Component of the multimeric SMAD3/SMAD4/JUN/FOS complex which forms at the AP1 promoter site; required for synergistic transcriptional activity in response to TGF-beta. Acts synergistically with SMAD1 and YY1 in bone morphogenetic protein (BMP)-mediated cardiac-specific gene expression. Binds to SMAD binding elements (SBEs) (5'-GTCT/AGAC-3') within BMP response element (BMPRE) of cardiac activating regions. May act as a tumor suppressor. Positively regulates PDPK1 kinase activity by stimulating its dissociation from the 14-3-3 protein YWHAQ which acts as a negative regulator. In muscle physiology, plays a central role in the balance between atrophy and hypertrophy. When recruited by MSTN, promotes atrophy response via phosphorylated SMAD2/4. MSTN decrease causes SMAD4 release and subsequent recruitment by the BMP pathway to promote hypertrophy via phosphorylated SMAD1/5/8. The polypeptide is Mothers against decapentaplegic homolog 4 (SMAD4) (Sus scrofa (Pig)).